The primary structure comprises 120 residues: Ragulator complex protein LAMTOR4 homolog (120 aa).

The disordered stretch occupies residues 93–120 (QNGVTTTTSSSSSNSVYNDASDSGAVLA). Residues 97-107 (TTTTSSSSSNS) are compositionally biased toward low complexity.

It belongs to the LAMTOR4 family. As to quaternary structure, part of the Ragulator complex composed of Lamtor3, Lamtor2, CG14184, CG14812, and Lamtor4.

It localises to the lysosome. In terms of biological role, regulator of the TOR pathway, a signaling cascade that promotes cell growth in response to growth factors, energy levels, and amino acids. As part of the Ragulator complex, may activate the TOR signaling cascade in response to amino acids. The protein is Ragulator complex protein LAMTOR4 homolog of Drosophila melanogaster (Fruit fly).